Consider the following 156-residue polypeptide: Small ribosomal subunit protein uS7 (156 aa).

The protein belongs to the universal ribosomal protein uS7 family. As to quaternary structure, part of the 30S ribosomal subunit. Contacts proteins S9 and S11.

In terms of biological role, one of the primary rRNA binding proteins, it binds directly to 16S rRNA where it nucleates assembly of the head domain of the 30S subunit. Is located at the subunit interface close to the decoding center, probably blocks exit of the E-site tRNA. The protein is Small ribosomal subunit protein uS7 of Pasteurella multocida (strain Pm70).